A 225-amino-acid chain; its full sequence is Holliday junction branch migration complex subunit RuvA (225 aa).

A domain I region spans residues M1–T71. The segment at S72–S150 is domain II. Residues K151–I161 are flexible linker. The segment at I161–R225 is domain III.

The protein belongs to the RuvA family. Homotetramer. Forms an RuvA(8)-RuvB(12)-Holliday junction (HJ) complex. HJ DNA is sandwiched between 2 RuvA tetramers; dsDNA enters through RuvA and exits via RuvB. An RuvB hexamer assembles on each DNA strand where it exits the tetramer. Each RuvB hexamer is contacted by two RuvA subunits (via domain III) on 2 adjacent RuvB subunits; this complex drives branch migration. In the full resolvosome a probable DNA-RuvA(4)-RuvB(12)-RuvC(2) complex forms which resolves the HJ.

It localises to the cytoplasm. Functionally, the RuvA-RuvB-RuvC complex processes Holliday junction (HJ) DNA during genetic recombination and DNA repair, while the RuvA-RuvB complex plays an important role in the rescue of blocked DNA replication forks via replication fork reversal (RFR). RuvA specifically binds to HJ cruciform DNA, conferring on it an open structure. The RuvB hexamer acts as an ATP-dependent pump, pulling dsDNA into and through the RuvAB complex. HJ branch migration allows RuvC to scan DNA until it finds its consensus sequence, where it cleaves and resolves the cruciform DNA. This Prochlorococcus marinus (strain MIT 9301) protein is Holliday junction branch migration complex subunit RuvA.